Consider the following 560-residue polypeptide: Nuclear receptor subfamily 5 group A member 2 (560 aa).

The tract at residues 17–54 is disordered; the sequence is GLPAIAPAPGSETPHSPKLEEKHREKRAGLPDRHRRPI. Residues 31 to 48 are compositionally biased toward basic and acidic residues; the sequence is HSPKLEEKHREKRAGLPD. Positions 104-179 form a DNA-binding region, nuclear receptor; sequence EELCPVCGDK…VGMKLEAVRA (76 aa). Residues Cys-107, Cys-110, Cys-124, Cys-127, Cys-143, Cys-149, Cys-159, and Cys-162 each coordinate Zn(2+). 2 consecutive NR C4-type zinc fingers follow at residues 107-127 and 143-162; these read CPVC…CESC and CIEN…CPYC. The segment at 173–188 is C-terminal extension (CTE); that stretch reads KLEAVRADRMRGGRNK. Residues 189–208 carry the FTZ-F1 box motif; that stretch reads FGPMYKRDRALKQQKKALIR. Residue Lys-289 forms a Glycyl lysine isopeptide (Lys-Gly) (interchain with G-Cter in SUMO1) linkage. The region spanning 319-558 is the NR LBD domain; that stretch reads SIPHLILELL…NLLIEMLHAK (240 aa). Tyr-535 and Lys-539 together coordinate a phospholipid derivative. Positions 547 to 558 are AF-2; the sequence is YNNLLIEMLHAK.

It belongs to the nuclear hormone receptor family. NR5 subfamily. As to quaternary structure, monomer; Binds DNA as a monomer. Interacts with nuclear receptor corepressors NR0B1 and NR0B2; repressing NR5A2 nuclear receptor activity. Interacts with nuclear receptor coactivators CTNNB1, PPARGC1A and NCOA2; interaction takes place following ligand-binding and promotes target gene activation. Interacts (when sumoylated) with GPS2; interaction with GPS2 onto hepatic acute phase protein promoters prevents N-Cor corepressor complex dissociation. Interacts with HNF1A. Interacts with GRIP1. Sumoylated by SUMO1 at Lys-289 during the hepatic acute phase response, leading to promote interaction with GPS2 and prevent N-Cor corepressor complex dissociation.

It is found in the nucleus. The protein resides in the chromosome. In terms of biological role, orphan nuclear receptor that binds DNA as a monomer to the 5'-TCAAGGCCA-3' sequence and controls expression of target genes: regulates key biological processes, such as early embryonic development, cholesterol and bile acid synthesis pathways, as well as liver and pancreas morphogenesis. Ligand-binding causes conformational change which causes recruitment of coactivators, promoting target gene activation. The specific ligand is unknown, but specific phospholipids, such as phosphatidylethanolamine, phosphatidylserine, dilauroyl phosphatidylcholine and diundecanoyl phosphatidylcholine can act as ligand in vitro. Acts as a pioneer transcription factor, which unwraps target DNA from histones and elicits local opening of closed chromatin. Plays a central role during preimplantation stages of embryonic development. Plays a minor role in zygotic genome activation (ZGA) by regulating a small set of two-cell stage genes. Plays a major role in morula development (2-16 cells embryos) by acting as a master regulator at the 8-cell stage, controlling expression of lineage-specifying transcription factors and genes involved in mitosis, telomere maintenance and DNA repair. Zygotic NR5A2 binds to both closed and open chromatin with other transcription factors, often at SINE B1/Alu repeats DNA elements, promoting chromatin accessibility at nearby regulatory regions. Also involved in the epiblast stage of development and embryonic stem cell pluripotency, by promoting expression of POU5F1/OCT4. Regulates other processes later in development, such as formation of connective tissue in lower jaw and middle ear, neural stem cell differentiation, ovarian follicle development and Sertoli cell differentiation. Involved in exocrine pancreas development and acinar cell differentiation. Acts as an essential transcriptional regulator of lipid metabolism. Key regulator of cholesterol 7-alpha-hydroxylase gene (CYP7A) expression in liver. Also acts as a negative regulator of inflammation in different organs, such as, liver and pancreas. Protects against intestinal inflammation via its ability to regulate glucocorticoid production. Plays an anti-inflammatory role during the hepatic acute phase response by acting as a corepressor: inhibits the hepatic acute phase response by preventing dissociation of the N-Cor corepressor complex. Acts as a regulator of immunity by promoting lymphocyte T-cell development, proliferation and effector functions. Also involved in resolution of endoplasmic reticulum stress in the liver. The sequence is that of Nuclear receptor subfamily 5 group A member 2 from Rattus norvegicus (Rat).